Reading from the N-terminus, the 491-residue chain is UDP-glycosyltransferase 73C1 (491 aa).

Residues Ser292, 352-354 (SPQ), 369-377 (HCGWNSTLE), and 391-394 (FGDQ) each bind UDP-alpha-D-glucose.

It belongs to the UDP-glycosyltransferase family.

In terms of biological role, involved in the O-glucosylation of trans-zeatin and dihydrozeatin. Also active in vitro on cis-zeatin, dihydrozeatin-9-N-Glc, and olomoucine. Can detoxify the explosive 2,4,6-trinitrotoluene in plant by forming O- or C-glucose conjugates. This Arabidopsis thaliana (Mouse-ear cress) protein is UDP-glycosyltransferase 73C1 (UGT73C1).